Reading from the N-terminus, the 180-residue chain is Shikimate kinase (180 aa).

14 to 19 lines the ATP pocket; the sequence is GAGKST. Ser-18 serves as a coordination point for Mg(2+). Substrate-binding residues include Asp-36, Arg-60, and Gly-82. An ATP-binding site is contributed by Arg-120. Arg-140 is a substrate binding site. Gln-157 serves as a coordination point for ATP.

This sequence belongs to the shikimate kinase family. Monomer. It depends on Mg(2+) as a cofactor.

It is found in the cytoplasm. The catalysed reaction is shikimate + ATP = 3-phosphoshikimate + ADP + H(+). The protein operates within metabolic intermediate biosynthesis; chorismate biosynthesis; chorismate from D-erythrose 4-phosphate and phosphoenolpyruvate: step 5/7. Functionally, catalyzes the specific phosphorylation of the 3-hydroxyl group of shikimic acid using ATP as a cosubstrate. The chain is Shikimate kinase from Haemophilus influenzae (strain PittGG).